The primary structure comprises 310 residues: Protoheme IX farnesyltransferase 2 (310 aa).

9 consecutive transmembrane segments (helical) span residues 25–45, 49–69, 98–118, 121–141, 145–165, 176–196, 222–242, 245–265, and 277–297; these read PGII…AAKG, LVLM…GCAI, HVLL…ALFT, LALL…SLYM, SVYG…VGYC, VILL…IAIF, IVLY…AGYT, AFMA…LKGY, and QVFG…ALDF.

It belongs to the UbiA prenyltransferase family. Protoheme IX farnesyltransferase subfamily.

It is found in the cell inner membrane. The enzyme catalyses heme b + (2E,6E)-farnesyl diphosphate + H2O = Fe(II)-heme o + diphosphate. Its pathway is porphyrin-containing compound metabolism; heme O biosynthesis; heme O from protoheme: step 1/1. Converts heme B (protoheme IX) to heme O by substitution of the vinyl group on carbon 2 of heme B porphyrin ring with a hydroxyethyl farnesyl side group. This is Protoheme IX farnesyltransferase 2 from Shewanella sp. (strain MR-7).